A 606-amino-acid chain; its full sequence is DNA mismatch repair protein MutL (606 aa).

The disordered stretch occupies residues 377–401 (HRPLFAPQPAPQPDREPPLPDSGSR).

Belongs to the DNA mismatch repair MutL/HexB family.

In terms of biological role, this protein is involved in the repair of mismatches in DNA. It is required for dam-dependent methyl-directed DNA mismatch repair. May act as a 'molecular matchmaker', a protein that promotes the formation of a stable complex between two or more DNA-binding proteins in an ATP-dependent manner without itself being part of a final effector complex. This Geobacter sulfurreducens (strain ATCC 51573 / DSM 12127 / PCA) protein is DNA mismatch repair protein MutL.